We begin with the raw amino-acid sequence, 114 residues long: Non-specific lipid-transfer protein 2 (114 aa).

The signal sequence occupies residues 1 to 23; it reads MEMFGKIACFVVFCMVVVAPHAE. 4 disulfides stabilise this stretch: Cys-27–Cys-73, Cys-37–Cys-50, Cys-51–Cys-96, and Cys-71–Cys-110.

It belongs to the plant LTP family.

In terms of biological role, plant non-specific lipid-transfer proteins transfer phospholipids as well as galactolipids across membranes. May play a role in wax or cutin deposition in the cell walls of expanding epidermal cells and certain secretory tissues. This chain is Non-specific lipid-transfer protein 2 (LE16), found in Solanum lycopersicum (Tomato).